A 212-amino-acid polypeptide reads, in one-letter code: MKQLFRQWYDLSEIKKELTTRNWFPATSGNISIKVSHEPLTFLITASGKDKTKTTPDDFLLVDHLGVPVLETELRPSAETILHTHIYNNTNAGCVLHVHTTDNNVITNLYSDAVTLQNQEIIKALDIWEEGATIHIPIIENHSHIPTLGENFRKHIQGDSGAVLIRNHGITVWGRDSFDAKKRLEAYEFLFQFHIKLLSIQGGVSNGANSYS.

Zn(2+)-binding residues include His97 and His99.

It belongs to the aldolase class II family. MtnB subfamily. In terms of assembly, homotetramer. Zn(2+) serves as cofactor.

It catalyses the reaction 5-(methylsulfanyl)-D-ribulose 1-phosphate = 5-methylsulfanyl-2,3-dioxopentyl phosphate + H2O. It functions in the pathway amino-acid biosynthesis; L-methionine biosynthesis via salvage pathway; L-methionine from S-methyl-5-thio-alpha-D-ribose 1-phosphate: step 2/6. Catalyzes the dehydration of methylthioribulose-1-phosphate (MTRu-1-P) into 2,3-diketo-5-methylthiopentyl-1-phosphate (DK-MTP-1-P). In Bacillus thuringiensis subsp. konkukian (strain 97-27), this protein is Methylthioribulose-1-phosphate dehydratase.